A 491-amino-acid chain; its full sequence is Ketol-acid reductoisomerase (NADP(+)) (491 aa).

Residues 15–208 (AQLGKCRFMG…GGHRAGVLES (194 aa)) enclose the KARI N-terminal Rossmann domain. NADP(+) is bound by residues 45–48 (CGAQ), Arg-68, Arg-76, Ser-78, and 108–110 (DKQ). The active site involves His-132. Residue Gly-158 coordinates NADP(+). KARI C-terminal knotted domains follow at residues 209 to 344 (SFVA…TAPQ) and 345 to 484 (YEGK…MTDM). Positions 217, 221, 389, and 393 each coordinate Mg(2+). Ser-414 is a substrate binding site.

The protein belongs to the ketol-acid reductoisomerase family. Mg(2+) is required as a cofactor.

It carries out the reaction (2R)-2,3-dihydroxy-3-methylbutanoate + NADP(+) = (2S)-2-acetolactate + NADPH + H(+). The catalysed reaction is (2R,3R)-2,3-dihydroxy-3-methylpentanoate + NADP(+) = (S)-2-ethyl-2-hydroxy-3-oxobutanoate + NADPH + H(+). It participates in amino-acid biosynthesis; L-isoleucine biosynthesis; L-isoleucine from 2-oxobutanoate: step 2/4. Its pathway is amino-acid biosynthesis; L-valine biosynthesis; L-valine from pyruvate: step 2/4. Its function is as follows. Involved in the biosynthesis of branched-chain amino acids (BCAA). Catalyzes an alkyl-migration followed by a ketol-acid reduction of (S)-2-acetolactate (S2AL) to yield (R)-2,3-dihydroxy-isovalerate. In the isomerase reaction, S2AL is rearranged via a Mg-dependent methyl migration to produce 3-hydroxy-3-methyl-2-ketobutyrate (HMKB). In the reductase reaction, this 2-ketoacid undergoes a metal-dependent reduction by NADPH to yield (R)-2,3-dihydroxy-isovalerate. This chain is Ketol-acid reductoisomerase (NADP(+)), found in Escherichia coli (strain 55989 / EAEC).